The sequence spans 283 residues: ATP phosphoribosyltransferase (283 aa).

The protein belongs to the ATP phosphoribosyltransferase family. Long subfamily. It depends on Mg(2+) as a cofactor.

The protein localises to the cytoplasm. It carries out the reaction 1-(5-phospho-beta-D-ribosyl)-ATP + diphosphate = 5-phospho-alpha-D-ribose 1-diphosphate + ATP. It functions in the pathway amino-acid biosynthesis; L-histidine biosynthesis; L-histidine from 5-phospho-alpha-D-ribose 1-diphosphate: step 1/9. Feedback inhibited by histidine. In terms of biological role, catalyzes the condensation of ATP and 5-phosphoribose 1-diphosphate to form N'-(5'-phosphoribosyl)-ATP (PR-ATP). Has a crucial role in the pathway because the rate of histidine biosynthesis seems to be controlled primarily by regulation of HisG enzymatic activity. This Rhodococcus erythropolis (strain PR4 / NBRC 100887) protein is ATP phosphoribosyltransferase.